A 1207-amino-acid chain; its full sequence is DNA-directed RNA polymerase subunit beta' (1207 aa).

Zn(2+) contacts are provided by Cys-60, Cys-62, Cys-75, and Cys-78. Mg(2+)-binding residues include Asp-450, Asp-452, and Asp-454. Residues Cys-818, Cys-892, Cys-899, and Cys-902 each coordinate Zn(2+).

The protein belongs to the RNA polymerase beta' chain family. In terms of assembly, the RNAP catalytic core consists of 2 alpha, 1 beta, 1 beta' and 1 omega subunit. When a sigma factor is associated with the core the holoenzyme is formed, which can initiate transcription. Requires Mg(2+) as cofactor. It depends on Zn(2+) as a cofactor.

It catalyses the reaction RNA(n) + a ribonucleoside 5'-triphosphate = RNA(n+1) + diphosphate. Functionally, DNA-dependent RNA polymerase catalyzes the transcription of DNA into RNA using the four ribonucleoside triphosphates as substrates. In Lactococcus lactis subsp. cremoris (strain MG1363), this protein is DNA-directed RNA polymerase subunit beta'.